We begin with the raw amino-acid sequence, 741 residues long: NAD(P)H-quinone oxidoreductase subunit 5, chloroplastic (741 aa).

Helical transmembrane passes span 9–29 (WIIPFLPLPVPMLIGLGLLLF), 40–60 (WAFQSVLLLSIVMIFSMNLSI), 89–109 (IDPLTSIMSILITTVGIMVLI), 125–145 (FAYMSFFSTSMLGLVTSSNLI), 147–167 (IYIFWELVGMCSYLLIGFWFT), 185–205 (GDFGLLLGILGFYWITGSFEF), 219–239 (NEVNFLFVTLCAVLLFAGAIA), 258–278 (TPISALIHAATMVAAGIFLVA), 283–303 (LFIVIPHIMNFISLIGIITVF), 327–347 (LGYMMLALGMGSYRSALFHLI), 354–374 (ALLFLGSGSVIHSMETLVGYC), 396–416 (NSFLLGTLSLCGIPPLACFWS), 425–445 (WLYSPIFAIIAWSTAGLTAFY), 549–569 (LFPILILILFTLFVGFLGIPF), 605–625 (VFSVSIASFGIFIAFFLYKPV), and 718–738 (ISSYLFFYFSYVSIFLLIYYF).

It belongs to the complex I subunit 5 family. NDH is composed of at least 16 different subunits, 5 of which are encoded in the nucleus.

It is found in the plastid. It localises to the chloroplast thylakoid membrane. It catalyses the reaction a plastoquinone + NADH + (n+1) H(+)(in) = a plastoquinol + NAD(+) + n H(+)(out). The catalysed reaction is a plastoquinone + NADPH + (n+1) H(+)(in) = a plastoquinol + NADP(+) + n H(+)(out). NDH shuttles electrons from NAD(P)H:plastoquinone, via FMN and iron-sulfur (Fe-S) centers, to quinones in the photosynthetic chain and possibly in a chloroplast respiratory chain. The immediate electron acceptor for the enzyme in this species is believed to be plastoquinone. Couples the redox reaction to proton translocation, and thus conserves the redox energy in a proton gradient. In Athroisma gracile, this protein is NAD(P)H-quinone oxidoreductase subunit 5, chloroplastic (ndhF).